A 333-amino-acid polypeptide reads, in one-letter code: Transcription termination factor MTERF6, chloroplastic/mitochondrial (333 aa).

This sequence belongs to the mTERF family.

The protein localises to the plastid. The protein resides in the chloroplast. Its subcellular location is the mitochondrion. Functionally, transcription termination factor essential for chloroplast development. Required for maturation of 16S rRNA, 18S rRNA and 23S rRNA in the chloroplast. Binds to a specific region within the tRNA(Ile)(GAU) gene at a position adjacent to and downstream of the 16S rRNA gene. Required for the maturation of tRNA(Ile)(GAU). Binds to double-stranded DNA. The protein is Transcription termination factor MTERF6, chloroplastic/mitochondrial of Arabidopsis thaliana (Mouse-ear cress).